Consider the following 460-residue polypeptide: A-type ATP synthase subunit B 1 (460 aa).

Belongs to the ATPase alpha/beta chains family. As to quaternary structure, has multiple subunits with at least A(3), B(3), C, D, E, F, H, I and proteolipid K(x).

The protein localises to the cell membrane. Functionally, component of the A-type ATP synthase that produces ATP from ADP in the presence of a proton gradient across the membrane. The B chain is a regulatory subunit. In Methanospirillum hungatei JF-1 (strain ATCC 27890 / DSM 864 / NBRC 100397 / JF-1), this protein is A-type ATP synthase subunit B 1.